We begin with the raw amino-acid sequence, 328 residues long: Phosphate acyltransferase (328 aa).

It belongs to the PlsX family. Homodimer. Probably interacts with PlsY.

It is found in the cytoplasm. The enzyme catalyses a fatty acyl-[ACP] + phosphate = an acyl phosphate + holo-[ACP]. It functions in the pathway lipid metabolism; phospholipid metabolism. Catalyzes the reversible formation of acyl-phosphate (acyl-PO(4)) from acyl-[acyl-carrier-protein] (acyl-ACP). This enzyme utilizes acyl-ACP as fatty acyl donor, but not acyl-CoA. This chain is Phosphate acyltransferase, found in Campylobacter jejuni subsp. jejuni serotype O:23/36 (strain 81-176).